The sequence spans 198 residues: Transcription factor elt-7 (198 aa).

Over residues 1–18 the composition is skewed to polar residues; the sequence is MLPETTTLQPLPSVTTIM. Residues 1-20 form a disordered region; the sequence is MLPETTTLQPLPSVTTIMNE. The GATA-type zinc finger occupies 143-167; it reads CSHCSTTTTTLWRKNDEGNLECNAC.

Its subcellular location is the nucleus. Functionally, transcriptional activator that binds to the consensus sequence 5'-[AT]GATA[AG]-3'. Required for gut-specific differentiation, specifically acting with the GATA region-binding transcription factor elt-2 to control normal gene expression and promote normal formation of the intestine. May have a protective role in response to infection by Gram-negative bacteria such as P.aeruginosa. This is Transcription factor elt-7 from Caenorhabditis elegans.